Here is a 742-residue protein sequence, read N- to C-terminus: Clamp-binding protein CrfC (742 aa).

The segment at 41–45 is clamp-binding consensus; that stretch reads QLALP. The Dynamin-type G domain occupies 66–402; sequence SRLEMVLAIV…LWEDSLFAQP (337 aa). Residues 76 to 83 form a G1 motif region; that stretch reads GTMKAGKS. Residues 102 to 104 form a G2 motif region; that stretch reads MTA. The interval 236 to 239 is G3 motif; sequence DTPG. Positions 297-300 are G4 motif; it reads NKFD. Residues 331-334 form a G5 motif region; it reads FPVS. The stretch at 440-472 forms a coiled coil; sequence RAHGLNVACEQLRQNIHQIEESLQLLQLNQAQV.

The protein belongs to the TRAFAC class dynamin-like GTPase superfamily. Dynamin/Fzo/YdjA family. In terms of assembly, forms homooligomers. Binds to the beta sliding clamp processivity factor (DnaN) in the presence and absence of DNA, may bind to the clamp itself as homodimers or trimers. Homooligomers may be able to bind more than 1 clamp complex.

The protein localises to the cytoplasm. Important for the colocalization of sister nascent DNA strands after replication fork passage during DNA replication, and for positioning and subsequent partitioning of sister chromosomes. Does not have GTPase activity on its own. The sequence is that of Clamp-binding protein CrfC (crfC) from Escherichia coli (strain K12).